We begin with the raw amino-acid sequence, 323 residues long: tRNA U34 carboxymethyltransferase (323 aa).

Carboxy-S-adenosyl-L-methionine-binding positions include lysine 91, tryptophan 105, lysine 110, glycine 130, 152–154 (DPT), 181–182 (IE), methionine 196, tyrosine 200, and arginine 315.

This sequence belongs to the class I-like SAM-binding methyltransferase superfamily. CmoB family. In terms of assembly, homotetramer.

The catalysed reaction is carboxy-S-adenosyl-L-methionine + 5-hydroxyuridine(34) in tRNA = 5-carboxymethoxyuridine(34) in tRNA + S-adenosyl-L-homocysteine + H(+). Functionally, catalyzes carboxymethyl transfer from carboxy-S-adenosyl-L-methionine (Cx-SAM) to 5-hydroxyuridine (ho5U) to form 5-carboxymethoxyuridine (cmo5U) at position 34 in tRNAs. The polypeptide is tRNA U34 carboxymethyltransferase (Escherichia coli (strain K12 / MC4100 / BW2952)).